Here is a 320-residue protein sequence, read N- to C-terminus: D-amino-acid oxidase (320 aa).

FAD-binding residues include Ala-13, Gly-14, Val-15, Thr-42, Thr-43, Ser-44, Gly-48, and Ala-49. D-proline is bound by residues Tyr-220 and Arg-274. D-serine contacts are provided by Tyr-220 and Arg-274. FAD contacts are provided by Arg-274, Gly-299, Gly-300, Gly-302, and Thr-304. Gly-300 contacts D-proline. Gly-300 is a binding site for D-serine.

Belongs to the DAMOX/DASOX family. FAD is required as a cofactor.

It localises to the cytoplasm. The protein localises to the secreted. It is found in the cell wall. The catalysed reaction is a D-alpha-amino acid + O2 + H2O = a 2-oxocarboxylate + H2O2 + NH4(+). Functionally, catalyzes the oxidative deamination of D-amino acids with broad substrate specificity. Enables the organism to utilize D-amino acids as a source of nutrients. Enables the organism to utilize glycine as a carbon source. The chain is D-amino-acid oxidase from Mycobacterium tuberculosis (strain ATCC 25177 / H37Ra).